A 904-amino-acid polypeptide reads, in one-letter code: MVEQEGLTAKEIDYAFQQNENLGSKETSFLIPEDLQSPPEKRFNLFLRRRLMFQRSEHSKDSVFFRDGIRQIDFVLSYVEDLKKDGELKAERRREFEQNLRKTGLDLETEDKLNSEDGKTYFVKIHAPWEVLVTYAEVLGIKMPIKLSDIPRPKYPPLSYMLGAVKLPSSVKYPTPEYFTAQFSRHRQELFLIEDEATFFPSSTRNRIVYYILSRCPFGVEEGKKKIGIERLLNSNTYLSAYPLHDGQYWKPSKTTRPNERYNLCKNWARFSYFYKEQPFHLIRNYFGEKIGIYFVFLGYYTEMLLFAALVGLACFIYGLLSMENNRTSTEICDPDIGGQMIMCPLCDEVCDYWRLNTTCLHSKFSHLFDNESTVFFALFMGIWVTLFLEFWKQRQARLEYEWDLVDFEEEQQQLQLRPEFEAMCKHKKMNPVTKEMEPHMPLCHRIPWYFVSGTTVTFGMALLLSSMVSILIYRLSVFATFASFMESEATLQSVKSFFTPQLATALSGSCLNCIVILILNFFYEKISAWITKMEIPRTHQEYESSLTLKMFLFQFVNYYSSCFYVAFFKGKFVGYPGSYTYMFNIWRSEECGPAGCLIELTTQLTIIMIGKQIFGNIHEAFQPLIFNWWRRRRARTHSEKLYSRWEQDHDLQVYGHRGLFYEYLETVIQFGFATLFVASFPLAPLFALMNNIMGIRVDAWKLTTQYRRPVAAKAHSIGVWQDILFGMAIVSVATNAFIVSFTSDIIPRLVYFYAYSTNSTEPLSGYVNNSLSVFLIADFPNHTVPMEKKDFVTCRYRDYRYPPDHEDKYSHNMQFWHVLAAKMTFIIVMEHVVFLFKFLLAWLIPDVPKDVVEKIKREKLMTIKIIHDFELNKLKENLDVEYGNIMKNVLVDEDNSLKAKTTV.

At 1-290 (MVEQEGLTAK…HLIRNYFGEK (290 aa)) the chain is on the cytoplasmic side. The helical transmembrane segment at 291–311 (IGIYFVFLGYYTEMLLFAALV) threads the bilayer. The Extracellular portion of the chain corresponds to 312–371 (GLACFIYGLLSMENNRTSTEICDPDIGGQMIMCPLCDEVCDYWRLNTTCLHSKFSHLFDN). 3 N-linked (GlcNAc...) asparagine glycosylation sites follow: N326, N357, and N371. Residues 372 to 392 (ESTVFFALFMGIWVTLFLEFW) traverse the membrane as a helical segment. The Cytoplasmic segment spans residues 393–453 (KQRQARLEYE…CHRIPWYFVS (61 aa)). Residues 454-474 (GTTVTFGMALLLSSMVSILIY) traverse the membrane as a helical segment. At 475 to 502 (RLSVFATFASFMESEATLQSVKSFFTPQ) the chain is on the extracellular side. A helical transmembrane segment spans residues 503–523 (LATALSGSCLNCIVILILNFF). Topologically, residues 524-548 (YEKISAWITKMEIPRTHQEYESSLT) are cytoplasmic. The chain crosses the membrane as a helical span at residues 549 to 569 (LKMFLFQFVNYYSSCFYVAFF). Topologically, residues 570–667 (KGKFVGYPGS…RGLFYEYLET (98 aa)) are extracellular. A helical membrane pass occupies residues 668 to 688 (VIQFGFATLFVASFPLAPLFA). The Cytoplasmic segment spans residues 689–723 (LMNNIMGIRVDAWKLTTQYRRPVAAKAHSIGVWQD). A helical transmembrane segment spans residues 724-744 (ILFGMAIVSVATNAFIVSFTS). The Extracellular segment spans residues 745 to 825 (DIIPRLVYFY…FWHVLAAKMT (81 aa)). N-linked (GlcNAc...) asparagine glycosylation is found at N759, N769, and N782. A helical transmembrane segment spans residues 826 to 846 (FIIVMEHVVFLFKFLLAWLIP). The Cytoplasmic portion of the chain corresponds to 847 to 904 (DVPKDVVEKIKREKLMTIKIIHDFELNKLKENLDVEYGNIMKNVLVDEDNSLKAKTTV).

It belongs to the anoctamin family. Highly expressed in skeletal muscle, bone tissues and thyroid gland.

It is found in the endoplasmic reticulum membrane. The protein resides in the cell membrane. In terms of biological role, plays a role in plasma membrane repair in a process involving annexins. Does not exhibit calcium-activated chloride channel (CaCC) activity. The chain is Anoctamin-5 (Ano5) from Mus musculus (Mouse).